A 216-amino-acid chain; its full sequence is UPF0502 protein Smal_0052 (216 aa).

Belongs to the UPF0502 family.

The protein is UPF0502 protein Smal_0052 of Stenotrophomonas maltophilia (strain R551-3).